The following is a 53-amino-acid chain: uncharacterized protein (53 aa).

A compositionally biased stretch (polar residues) spans 1–10 (MHILTRSSKN). Residues 1–25 (MHILTRSSKNAFPRSRSRQDIHISS) form a disordered region.

This is an uncharacterized protein from Saccharomyces cerevisiae (strain ATCC 204508 / S288c) (Baker's yeast).